The chain runs to 365 residues: tRNA N6-adenosine threonylcarbamoyltransferase (365 aa).

Fe cation-binding residues include His-119 and His-123. Substrate-binding positions include 141–145 (LVSGG), Asp-174, Gly-187, and Asn-288. A Fe cation-binding site is contributed by Asp-316.

It belongs to the KAE1 / TsaD family. Requires Fe(2+) as cofactor.

Its subcellular location is the cytoplasm. The enzyme catalyses L-threonylcarbamoyladenylate + adenosine(37) in tRNA = N(6)-L-threonylcarbamoyladenosine(37) in tRNA + AMP + H(+). Required for the formation of a threonylcarbamoyl group on adenosine at position 37 (t(6)A37) in tRNAs that read codons beginning with adenine. Is involved in the transfer of the threonylcarbamoyl moiety of threonylcarbamoyl-AMP (TC-AMP) to the N6 group of A37, together with TsaE and TsaB. TsaD likely plays a direct catalytic role in this reaction. The protein is tRNA N6-adenosine threonylcarbamoyltransferase of Rhizobium leguminosarum bv. trifolii (strain WSM2304).